The chain runs to 493 residues: Insulinoma-associated protein 2 (493 aa).

Basic residues predominate over residues 1–12; that stretch reads MPRGFLVKRTKR. The SNAG domain stretch occupies residues 1-20; the sequence is MPRGFLVKRTKRSGSSYRAR. The interval 1 to 77 is disordered; the sequence is MPRGFLVKRT…PGPSPARPAG (77 aa). Residues 203-223 form a C2H2-type 1; atypical zinc finger; that stretch reads FICQLCKHQYADPFALAQHRC. The C2H2-type 2 zinc-finger motif lies at 231–253; the sequence is YRCPECDKVFSCPANLASHRRWH. The disordered stretch occupies residues 248–310; the sequence is SHRRWHKPRP…SGDGQHRDSA (63 aa). The span at 267–276 shows a compositional bias: pro residues; it reads PHAPLTPPDP. Residues 283 to 294 show a composition bias toward basic and acidic residues; that stretch reads ENGRVPRTDDQH. 3 consecutive C2H2-type zinc fingers follow at residues 354-376, 398-420, and 452-475; these read FVCP…LGTH, FACP…RLWH, and FSCK…NKCH.

In terms of tissue distribution, expressed in spleen, stomach, liver, kidney and testis. In the pancreas, expressed in islet cells, including insulin-producing beta-cells, but not in acinar cells (at protein level). In the brain, expressed in the neuronal cells of the cerebral cortex, the Purkinje cells of the cerebellum and the hippocampal region including CA1 and CA3 (at protein level).

The protein resides in the cytoplasm. It localises to the nucleus. In terms of biological role, may function as a growth suppressor or tumor suppressor in liver cells and in certain neurons. In Mus musculus (Mouse), this protein is Insulinoma-associated protein 2 (Insm2).